A 750-amino-acid polypeptide reads, in one-letter code: Dual specificity tyrosine-phosphorylation-regulated kinase 1A (750 aa).

2 disordered regions span residues 56 to 81 (ALPY…RDPA) and 104 to 129 (YAKK…KVYN). The Bipartite nuclear localization signal motif lies at 109–126 (RRHQQGQGDDSSHKKERK). The Protein kinase domain maps to 151–471 (YEIDSLIGKG…PYYALQHSFF (321 aa)). Residues 157 to 165 (IGKGSFGQV), Lys-180, and 230 to 233 (FEML) contribute to the ATP site. The active-site Proton acceptor is Asp-279. 4 disordered regions span residues 400–434 (TKDG…AGES), 477–531 (EGTN…RHSG), 583–666 (SQKN…GNQA), and 731–750 (DRED…VASS). The span at 477–493 (EGTNTSNSVSTSPAMEQ) shows a compositional bias: polar residues. Residues 494 to 517 (SQSSGTTSSTSSSSGGSSGTSNSG) show a composition bias toward low complexity. The interval 584–612 (QKNVPHHHGNGSHHHHHHHHHHHGQHILS) is histidine-rich domain (HRD). Basic residues predominate over residues 587–608 (VPHHHGNGSHHHHHHHHHHHGQ). The segment covering 610-621 (ILSNRTRTRIYN) has biased composition (polar residues). The segment covering 622 to 659 (SPSTSSSTQDSMDIGNSHHSMTSLSSSTTSSSTSSSST) has biased composition (low complexity). Over residues 741–750 (CVQQSPVASS) the composition is skewed to polar residues.

Belongs to the protein kinase superfamily. CMGC Ser/Thr protein kinase family. MNB/DYRK subfamily. Autophosphorylated on tyrosine residues.

The protein resides in the nucleus. The protein localises to the nucleus speckle. It catalyses the reaction L-seryl-[protein] + ATP = O-phospho-L-seryl-[protein] + ADP + H(+). The catalysed reaction is L-threonyl-[protein] + ATP = O-phospho-L-threonyl-[protein] + ADP + H(+). The enzyme catalyses L-tyrosyl-[protein] + ATP = O-phospho-L-tyrosyl-[protein] + ADP + H(+). It carries out the reaction [DNA-directed RNA polymerase] + ATP = phospho-[DNA-directed RNA polymerase] + ADP + H(+). Its function is as follows. Dual-specificity kinase which possesses both serine/threonine and tyrosine kinase activities. Exhibits a substrate preference for proline at position P+1 and arginine at position P-3. Plays an important role in double-strand breaks (DSBs) repair following DNA damage. Mechanistically, phosphorylates RNF169 and increases its ability to block accumulation of TP53BP1 at the DSB sites thereby promoting homologous recombination repair (HRR). Also acts as a positive regulator of transcription by acting as a CTD kinase that mediates phosphorylation of the CTD (C-terminal domain) of the large subunit of RNA polymerase II (RNAP II) POLR2A. Modulates alternative splicing by phosphorylating the splice factor SRSF6. Phosphorylates SEPTIN4, SEPTIN5 and SF3B1. This Xenopus laevis (African clawed frog) protein is Dual specificity tyrosine-phosphorylation-regulated kinase 1A.